We begin with the raw amino-acid sequence, 217 residues long: tRNA (guanine-N(7)-)-methyltransferase (217 aa).

Residues Glu-44, Asp-69, Asp-96, and Asp-118 each coordinate S-adenosyl-L-methionine. Residue Asp-118 is part of the active site. Lys-122 is a binding site for substrate. An interaction with RNA region spans residues 124-129 (RHEKRR). Substrate-binding positions include Asp-154 and 193–196 (TEYE).

It belongs to the class I-like SAM-binding methyltransferase superfamily. TrmB family.

It carries out the reaction guanosine(46) in tRNA + S-adenosyl-L-methionine = N(7)-methylguanosine(46) in tRNA + S-adenosyl-L-homocysteine. It functions in the pathway tRNA modification; N(7)-methylguanine-tRNA biosynthesis. Its function is as follows. Catalyzes the formation of N(7)-methylguanine at position 46 (m7G46) in tRNA. This is tRNA (guanine-N(7)-)-methyltransferase from Lactococcus lactis subsp. cremoris (strain SK11).